The sequence spans 284 residues: Cell division protein DivIB (284 aa).

A disordered region spans residues 1–21 (MFGKRKDSKNKAMRDNEELTP). At 1–63 (MFGKRKDSKN…GLRKRRLQKR (63 aa)) the chain is on the cytoplasmic side. Residues 64–84 (VITLASIFGISAIISLYAILP) form a helical membrane-spanning segment. Residues 85–284 (VSRVSNIEIE…VGAYAYPYBK (200 aa)) lie on the Extracellular side of the membrane. Residues 86–156 (SRVSNIEIEG…NVVKFKVTEY (71 aa)) form the POTRA domain.

Belongs to the FtsQ/DivIB family. DivIB subfamily.

The protein resides in the cell membrane. In terms of biological role, cell division protein that may be involved in stabilizing or promoting the assembly of the division complex. The polypeptide is Cell division protein DivIB (Ligilactobacillus salivarius (strain CECT 5713) (Lactobacillus salivarius)).